A 400-amino-acid polypeptide reads, in one-letter code: Enoyl-[acyl-carrier-protein] reductase [NADH] (400 aa).

Residues 48 to 53, 74 to 75, 111 to 112, and 139 to 140 each bind NAD(+); these read GSSSGY, FE, DA, and LA. Y225 serves as a coordination point for substrate. Y235 serves as the catalytic Proton donor. Residues K244 and 273–275 contribute to the NAD(+) site; that span reads VVT.

This sequence belongs to the TER reductase family. As to quaternary structure, monomer.

The enzyme catalyses a 2,3-saturated acyl-[ACP] + NAD(+) = a (2E)-enoyl-[ACP] + NADH + H(+). It functions in the pathway lipid metabolism; fatty acid biosynthesis. Its function is as follows. Involved in the final reduction of the elongation cycle of fatty acid synthesis (FAS II). Catalyzes the reduction of a carbon-carbon double bond in an enoyl moiety that is covalently linked to an acyl carrier protein (ACP). This chain is Enoyl-[acyl-carrier-protein] reductase [NADH], found in Shewanella baltica (strain OS185).